A 414-amino-acid chain; its full sequence is Pre-mRNA-processing protein 45 (414 aa).

Disordered stretches follow at residues 128–159 (ESKRQDPLQPSRQKNTSSKIVLPEDDETDTPI) and 264–292 (RSKIQTQSSAVKKRGSRFEGGRHQNKKIK). Residues 135–146 (LQPSRQKNTSSK) show a composition bias toward polar residues.

Belongs to the SNW family. Associated with the spliceosome.

It is found in the nucleus. Involved in pre-mRNA splicing. The polypeptide is Pre-mRNA-processing protein 45 (PRP45) (Candida glabrata (strain ATCC 2001 / BCRC 20586 / JCM 3761 / NBRC 0622 / NRRL Y-65 / CBS 138) (Yeast)).